A 711-amino-acid polypeptide reads, in one-letter code: Long-chain-fatty-acid--CoA ligase 4 (711 aa).

The helical; Signal-anchor for type III membrane protein transmembrane segment at 8–28 threads the bilayer; sequence LTIILLPVHLLITIYSALIFI. Residues 29-711 lie on the Cytoplasmic side of the membrane; the sequence is PWYFLTNAKK…KDIERMYGGK (683 aa). Residue Ser-447 is modified to Phosphoserine.

It belongs to the ATP-dependent AMP-binding enzyme family. Mg(2+) serves as cofactor.

Its subcellular location is the mitochondrion outer membrane. The protein localises to the peroxisome membrane. It localises to the microsome membrane. The protein resides in the endoplasmic reticulum membrane. It is found in the cell membrane. It catalyses the reaction a long-chain fatty acid + ATP + CoA = a long-chain fatty acyl-CoA + AMP + diphosphate. It carries out the reaction (5Z,8Z,11Z,14Z)-eicosatetraenoate + ATP + CoA = (5Z,8Z,11Z,14Z)-eicosatetraenoyl-CoA + AMP + diphosphate. The enzyme catalyses hexadecanoate + ATP + CoA = hexadecanoyl-CoA + AMP + diphosphate. The catalysed reaction is (E)-hexadec-2-enoate + ATP + CoA = (2E)-hexadecenoyl-CoA + AMP + diphosphate. It catalyses the reaction 15-hydroxy-(5Z,8Z,11Z,13E)-eicosatetraenoate + ATP + CoA = 15-hydroxy-(5Z,8Z,11Z,13E)-eicosatetraenoyl-CoA + AMP + diphosphate. It carries out the reaction 12-hydroxy-(5Z,8Z,10E,14Z)-eicosatetraenoate + ATP + CoA = 12-hydroxy-(5Z,8Z,10E,14Z)-eicosatetraenoyl-CoA + AMP + diphosphate. The enzyme catalyses 5-hydroxy-(6E,8Z,11Z,14Z)-eicosatetraenoate + ATP + CoA = 5-hydroxy-(6E,8Z,11Z,14Z)-eicosatetraenoyl-CoA + AMP + diphosphate. The catalysed reaction is 5,6-epoxy-(8Z,11Z,14Z)-eicosatrienoate + ATP + CoA = 5,6-epoxy-(8Z,11Z,14Z)-eicosatrienoyl-CoA + AMP + diphosphate. It catalyses the reaction 14,15-epoxy-(5Z,8Z,11Z)-eicosatrienoate + ATP + CoA = 14,15-epoxy-(5Z,8Z,11Z)-eicosatrienoyl-CoA + AMP + diphosphate. It carries out the reaction 11,12-epoxy-(5Z,8Z,14Z)-eicosatrienoate + ATP + CoA = 11,12-epoxy-(5Z,8Z,14Z)-eicosatrienoyl-CoA + AMP + diphosphate. The enzyme catalyses 8,9-epoxy-(5Z,11Z,14Z)-eicosatrienoate + ATP + CoA = 8,9-epoxy-(5Z,11Z,14Z)-eicosatrienoyl-CoA + AMP + diphosphate. Its activity is regulated as follows. Both triacsin C and rosiglitazone inhibit arachidonoyl-CoA ligase activity. In terms of biological role, catalyzes the conversion of long-chain fatty acids to their active form acyl-CoA for both synthesis of cellular lipids, and degradation via beta-oxidation. Preferentially activates arachidonate and eicosapentaenoate as substrates. Preferentially activates 8,9-EET &gt; 14,15-EET &gt; 5,6-EET &gt; 11,12-EET. Modulates glucose-stimulated insulin secretion by regulating the levels of unesterified EETs. Modulates prostaglandin E2 secretion. The sequence is that of Long-chain-fatty-acid--CoA ligase 4 (ACSL4) from Homo sapiens (Human).